The primary structure comprises 59 residues: Toxin TxpA (59 aa).

A helical membrane pass occupies residues 7–27 (LMVMIGFANLIGGIMTWVISL).

Its subcellular location is the cell membrane. Its function is as follows. Toxic component of a type I toxin-antitoxin (TA) system. Overexpression of txpA causes cell lysis; the TxpA protein has been suggested to act on the cell membrane or might possibly block cell wall synthesis. Overexpression in E.coli is not toxic. The polypeptide is Toxin TxpA (Bacillus subtilis (strain 168)).